The primary structure comprises 361 residues: MTSAESLLFTSLGPSPSSGDGDCRFNEEFKFILLPMSYAVVFVLGLALNAPTLWLFLFRLRPWDATATYMFHLALSDTLYVLSLPTLVYYYAARNHWPFGTGLCKFVRFLFYWNLYCSVLFLTCISVHRYLGICHPLRAIRWGRPRFASLLCLGVWLVVAGCLVPNLFFVTTNANGTTILCHDTTLPEEFDHYVYFSSAVMVLLFGLPFLITLVCYGLMARRLYRPLPGAGQSSSRLRSLRTIAVVLTVFAVCFVPFHITRTIYYQARLLQADCHVLNIVNVVYKVTRPLASANSCLDPVLYLFTGDKYRNQLQQLCRGSKPKPRTAASSLALVTLHEESISRWADTHQDSTFSAYEGDRL.

The disordered stretch occupies residues 1–20 (MTSAESLLFTSLGPSPSSGD). Topologically, residues 1-30 (MTSAESLLFTSLGPSPSSGDGDCRFNEEFK) are extracellular. Residues 31-58 (FILLPMSYAVVFVLGLALNAPTLWLFLF) traverse the membrane as a helical segment. The Cytoplasmic segment spans residues 59 to 68 (RLRPWDATAT). The chain crosses the membrane as a helical span at residues 69–91 (YMFHLALSDTLYVLSLPTLVYYY). The Extracellular segment spans residues 92 to 108 (AARNHWPFGTGLCKFVR). Cys104 and Cys181 are oxidised to a cystine. The helical transmembrane segment at 109 to 127 (FLFYWNLYCSVLFLTCISV) threads the bilayer. The Cytoplasmic segment spans residues 128–149 (HRYLGICHPLRAIRWGRPRFAS). The helical transmembrane segment at 150–170 (LLCLGVWLVVAGCLVPNLFFV) threads the bilayer. Residues 171 to 192 (TTNANGTTILCHDTTLPEEFDH) are Extracellular-facing. Residue Asn175 is glycosylated (N-linked (GlcNAc...) asparagine). The chain crosses the membrane as a helical span at residues 193–218 (YVYFSSAVMVLLFGLPFLITLVCYGL). Residues 219–242 (MARRLYRPLPGAGQSSSRLRSLRT) lie on the Cytoplasmic side of the membrane. A helical transmembrane segment spans residues 243 to 265 (IAVVLTVFAVCFVPFHITRTIYY). Residues 266–283 (QARLLQADCHVLNIVNVV) lie on the Extracellular side of the membrane. Residues 284 to 305 (YKVTRPLASANSCLDPVLYLFT) form a helical membrane-spanning segment. Residues 306-361 (GDKYRNQLQQLCRGSKPKPRTAASSLALVTLHEESISRWADTHQDSTFSAYEGDRL) lie on the Cytoplasmic side of the membrane.

This sequence belongs to the G-protein coupled receptor 1 family. Post-translationally, phosphorylation of Ser-329 and Ser-330 is a key step in agonist-dependent desensitization and loss of surface P2RY4. This phosphorylation does not involve PKC, nor other calcium-activated kinases. As to expression, widely expressed at low levels. In brain, higher expression in the pineal gland and ventricular system.

The protein localises to the cell membrane. Receptor for ATP and UTP coupled to G-proteins that activate a phosphatidylinositol-calcium second messenger system. Not activated by ADP or UDP. This Rattus norvegicus (Rat) protein is P2Y purinoceptor 4 (P2ry4).